Here is a 181-residue protein sequence, read N- to C-terminus: Protein CRABS CLAW (181 aa).

A C4-type zinc finger spans residues Cys-26–Cys-53. The tract at residues Gly-80–Tyr-122 is disordered. Residues Ser-87–Gln-99 show a composition bias toward low complexity. A compositionally biased stretch (pro residues) spans Pro-100–Val-109.

The protein belongs to the YABBY family. In terms of tissue distribution, restricted to flowers, mostly in carpels and nectaries. Expressed at low levels in sepal primordia (buds), sepal receptacle and developing petal. Not detected in placental tissues, septum, stigma and ovules.

It is found in the nucleus. Its function is as follows. Transcription factor required for the initiation of nectary development. Also involved in suppressing early radial growth of the gynoecium, in promoting its later elongation and in fusion of its carpels by regulating both cell division and expansion. Establishes the polar differentiation in the carpels by specifying abaxial cell fate in the ovary wall. Regulates both cell division and expansion. In Arabidopsis thaliana (Mouse-ear cress), this protein is Protein CRABS CLAW.